A 572-amino-acid chain; its full sequence is Frizzled-7 (572 aa).

The first 32 residues, 1-32 (MRGPGTAASHSPLGLCALVLALLGALPTDTRA), serve as a signal peptide directing secretion. Over 33-254 (QPYHGEKGIS…EEERRFARLW (222 aa)) the chain is Extracellular. The 120-residue stretch at 44–163 (PDHGFCQPIS…HGAGEICVGQ (120 aa)) folds into the FZ domain. 5 disulfide bridges follow: C49-C110, C57-C103, C94-C131, C120-C160, and C124-C148. N-linked (GlcNAc...) asparagine glycosylation occurs at N63. Residue N164 is glycosylated (N-linked (GlcNAc...) asparagine). Residues 255-275 (VGVWSVLCCASTLFTVLTYLV) form a helical membrane-spanning segment. Residues 276–286 (DMRRFSYPERP) are Cytoplasmic-facing. A helical membrane pass occupies residues 287 to 307 (IIFLSGCYFMVAVAHVAGFLL). The Extracellular segment spans residues 308-334 (EDRAVCVERFSDDGYRTVAQGTKKEGC). The helical transmembrane segment at 335-355 (TILFMVLYFFGMASSIWWVIL) threads the bilayer. Residues 356-377 (SLTWFLAAGMKWGHEAIEANSQ) are Cytoplasmic-facing. A helical transmembrane segment spans residues 378–398 (YFHLAAWAVPAVKTITILAMG). The Extracellular segment spans residues 399–421 (QVDGDLLSGVCYVGLSSVDALRG). A helical membrane pass occupies residues 422 to 442 (FVLAPLFVYLFIGTSFLLAGF). Topologically, residues 443–468 (VSLFRIRTIMKHDGTKTEKLEKLMVR) are cytoplasmic. Residues 469-489 (IGVFSVLYTVPATIVLACYFY) traverse the membrane as a helical segment. The Extracellular segment spans residues 490–526 (EQAFREHWERTWLLQTCKSYAVPCPPGHFSPMSPDFT). Residues 527–547 (VFMIKYLMTMIVGITTGFWIW) traverse the membrane as a helical segment. The Cytoplasmic portion of the chain corresponds to 548–572 (SGKTLQSWRRFYHRLSHSSKGETAV). The Lys-Thr-X-X-X-Trp motif, mediates interaction with the PDZ domain of Dvl family members signature appears at 550–555 (KTLQSW). A PDZ-binding motif is present at residues 570 to 572 (TAV).

The protein belongs to the G-protein coupled receptor Fz/Smo family. As to quaternary structure, interacts with MAGI3. Interacts with DVL1. Interacts with CCDC88C/DAPLE; the interaction displaces DVL1 from FZD7, leading to inhibition of canonical Wnt signaling and triggering of non-canonical Wnt responses. Interacts with MYOC. Binds to SDCBP; this interaction is increased by inositol trisphosphate (IP3). Interacts with glypican GPC3. Post-translationally, ubiquitinated by ZNRF3, leading to its degradation by the proteasome.

The protein localises to the cell membrane. It is found in the endosome membrane. Functionally, receptor for Wnt proteins. Most frizzled receptors are coupled to the beta-catenin canonical signaling pathway, which leads to the activation of disheveled proteins, inhibition of GSK-3 kinase, nuclear accumulation of beta-catenin and activation of Wnt target genes. A second signaling pathway involving PKC and calcium fluxes has been seen for some family members, but it is not yet clear if it represents a distinct pathway or if it can be integrated in the canonical pathway, as PKC seems to be required for Wnt-mediated inactivation of GSK-3 kinase. Both pathways seem to involve interactions with G-proteins. Activation by WNT8 induces expression of beta-catenin target genes. Following ligand activation, binds to CCDC88C/DAPLE which displaces DVL1 from FZD7 and leads to inhibition of canonical Wnt signaling, activation of G-proteins by CCDC88C and triggering of non-canonical Wnt responses. May be involved in transduction and intercellular transmission of polarity information during tissue morphogenesis and/or in differentiated tissues. The protein is Frizzled-7 (Fzd7) of Mus musculus (Mouse).